A 1141-amino-acid chain; its full sequence is Isoleucine--tRNA ligase (1141 aa).

The 'HIGH' region motif lies at 50–60 (PSANGMPGIHH). The 'KMSKS' region signature appears at 689–693 (KMSKR). Lys692 contributes to the ATP binding site.

Belongs to the class-I aminoacyl-tRNA synthetase family. IleS type 2 subfamily. As to quaternary structure, monomer. Zn(2+) serves as cofactor.

The protein resides in the cytoplasm. It catalyses the reaction tRNA(Ile) + L-isoleucine + ATP = L-isoleucyl-tRNA(Ile) + AMP + diphosphate. Its function is as follows. Catalyzes the attachment of isoleucine to tRNA(Ile). As IleRS can inadvertently accommodate and process structurally similar amino acids such as valine, to avoid such errors it has two additional distinct tRNA(Ile)-dependent editing activities. One activity is designated as 'pretransfer' editing and involves the hydrolysis of activated Val-AMP. The other activity is designated 'posttransfer' editing and involves deacylation of mischarged Val-tRNA(Ile). This Bacteroides fragilis (strain ATCC 25285 / DSM 2151 / CCUG 4856 / JCM 11019 / LMG 10263 / NCTC 9343 / Onslow / VPI 2553 / EN-2) protein is Isoleucine--tRNA ligase.